A 371-amino-acid polypeptide reads, in one-letter code: DNA primase large subunit PriL (371 aa).

Residues C230, C301, C310, and C317 each contribute to the [4Fe-4S] cluster site. A disordered region spans residues 337–371; that stretch reads EREKEEGKEKGNEEKKEKREEHEKKNEKGNEIKEK.

The protein belongs to the eukaryotic-type primase large subunit family. Heterodimer of a small subunit (PriS) and a large subunit (PriL). Requires [4Fe-4S] cluster as cofactor.

In terms of biological role, regulatory subunit of DNA primase, an RNA polymerase that catalyzes the synthesis of short RNA molecules used as primers for DNA polymerase during DNA replication. Stabilizes and modulates the activity of the small subunit, increasing the rate of DNA synthesis, and conferring RNA synthesis capability. The DNA polymerase activity may enable DNA primase to also catalyze primer extension after primer synthesis. May also play a role in DNA repair. This chain is DNA primase large subunit PriL, found in Methanosarcina acetivorans (strain ATCC 35395 / DSM 2834 / JCM 12185 / C2A).